A 195-amino-acid chain; its full sequence is Imidazoleglycerol-phosphate dehydratase (195 aa).

Belongs to the imidazoleglycerol-phosphate dehydratase family.

It localises to the cytoplasm. It carries out the reaction D-erythro-1-(imidazol-4-yl)glycerol 3-phosphate = 3-(imidazol-4-yl)-2-oxopropyl phosphate + H2O. It participates in amino-acid biosynthesis; L-histidine biosynthesis; L-histidine from 5-phospho-alpha-D-ribose 1-diphosphate: step 6/9. The chain is Imidazoleglycerol-phosphate dehydratase from Burkholderia thailandensis (strain ATCC 700388 / DSM 13276 / CCUG 48851 / CIP 106301 / E264).